Here is a 273-residue protein sequence, read N- to C-terminus: Eukaryotic translation initiation factor 3 subunit J (273 aa).

The interval 1 to 158 is disordered; it reads MPTKKWEDEE…DPSDPSKTVE (158 aa). The segment covering 34–54 has biased composition (acidic residues); it reads DEEANDSDVLDSWDAAEDSEV. Residues 50–97 are a coiled coil; sequence EDSEVEREKAKKAAEAKAKAEAEAKANKKTKAARINEHKQRRKEAEES. Residues 55 to 75 show a composition bias toward basic and acidic residues; it reads EREKAKKAAEAKAKAEAEAKA. The span at 95 to 104 shows a compositional bias: acidic residues; the sequence is EESDESDDET. Residues 105–126 show a composition bias toward basic and acidic residues; sequence ESQRRERLRRTEKEADLAHAED.

The protein belongs to the eIF-3 subunit J family. In terms of assembly, component of the eukaryotic translation initiation factor 3 (eIF-3) complex.

The protein resides in the cytoplasm. Functionally, component of the eukaryotic translation initiation factor 3 (eIF-3) complex, which is involved in protein synthesis of a specialized repertoire of mRNAs and, together with other initiation factors, stimulates binding of mRNA and methionyl-tRNAi to the 40S ribosome. The eIF-3 complex specifically targets and initiates translation of a subset of mRNAs involved in cell proliferation. The polypeptide is Eukaryotic translation initiation factor 3 subunit J (Pyricularia oryzae (strain 70-15 / ATCC MYA-4617 / FGSC 8958) (Rice blast fungus)).